Here is a 449-residue protein sequence, read N- to C-terminus: Probable pectate lyase P59 (449 aa).

An N-terminal signal peptide occupies residues 1–22 (MGGPKIKYSFLFLCITFATIIP). N-linked (GlcNAc...) asparagine glycosylation is found at Asn56, Asn80, and Asn81. Residues Asp245, Asp269, and Asp273 each coordinate Ca(2+). Residue Arg325 is part of the active site.

The protein belongs to the polysaccharide lyase 1 family. The cofactor is Ca(2+). Expressed in anthers and pollen.

It carries out the reaction Eliminative cleavage of (1-&gt;4)-alpha-D-galacturonan to give oligosaccharides with 4-deoxy-alpha-D-galact-4-enuronosyl groups at their non-reducing ends.. It functions in the pathway glycan metabolism; pectin degradation; 2-dehydro-3-deoxy-D-gluconate from pectin: step 2/5. In terms of biological role, might be needed during pollen development and tube growth. This Solanum lycopersicum (Tomato) protein is Probable pectate lyase P59 (LAT59).